Here is a 294-residue protein sequence, read N- to C-terminus: MSEPIQPTRPAASGCPMHGAQAESWHDAQMDFSKSMSYGDYLALDQILNAQHPRSPDHNEMLFIVQHQTTELWMKLMLHELRAARDCVRNDDLPPAFKMLARVSRIMDQLVQAWNVLATMTPPEYSAMRPHLGQSSGFQSYQYREIEFILGNKNAAMLQPHAHQPEHYAQVKAALETPSLYDEAIRYMARHGFAFDADCIERDWSRPVTYNASVEAAWLEVYRDPTHHWELYELAEKFVDLEDAFRQWRFRHVTTVERVIGFKRGTGGTEGVNYLRKMLDVVLFPELWKLRTDL.

Positions 1-20 (MSEPIQPTRPAASGCPMHGA) are disordered. Residues 63-67 (FIVQH), Tyr125, and Arg129 contribute to the substrate site. A heme-binding site is contributed by His252. Thr266 is a binding site for substrate.

The protein belongs to the tryptophan 2,3-dioxygenase family. As to quaternary structure, homotetramer. The cofactor is heme.

The catalysed reaction is L-tryptophan + O2 = N-formyl-L-kynurenine. It participates in amino-acid degradation; L-tryptophan degradation via kynurenine pathway; L-kynurenine from L-tryptophan: step 1/2. Heme-dependent dioxygenase that catalyzes the oxidative cleavage of the L-tryptophan (L-Trp) pyrrole ring and converts L-tryptophan to N-formyl-L-kynurenine. Catalyzes the oxidative cleavage of the indole moiety. This Ralstonia nicotianae (strain ATCC BAA-1114 / GMI1000) (Ralstonia solanacearum) protein is Tryptophan 2,3-dioxygenase 1.